Consider the following 566-residue polypeptide: Serine/threonine-protein kinase ppk14 (566 aa).

Residues 1–31 (MNELHDGESSEEGRINVEDHLEEAKKDDTGH) show a composition bias toward basic and acidic residues. 2 disordered regions span residues 1-39 (MNELHDGESSEEGRINVEDHLEEAKKDDTGHWKHSGTAK) and 60-152 (SRKK…EKLK). The span at 74 to 85 (AANQSPSGAPES) shows a compositional bias: polar residues. The span at 119–129 (SFFKSGRKKKD) shows a compositional bias: basic residues. Polar residues predominate over residues 134-145 (RNVSRSNGADTS). One can recognise a Protein kinase domain in the interval 195-485 (FEKVFLLGKG…AADVKLHPFF (291 aa)). ATP contacts are provided by residues 201–209 (LGKGDVGRV) and K224. Catalysis depends on D320, which acts as the Proton acceptor. A Phosphothreonine modification is found at T379. S381 bears the Phosphoserine mark. T385 carries the phosphothreonine modification.

The protein belongs to the protein kinase superfamily. Ser/Thr protein kinase family. KIN82 subfamily.

It carries out the reaction L-seryl-[protein] + ATP = O-phospho-L-seryl-[protein] + ADP + H(+). The catalysed reaction is L-threonyl-[protein] + ATP = O-phospho-L-threonyl-[protein] + ADP + H(+). The polypeptide is Serine/threonine-protein kinase ppk14 (ppk14) (Schizosaccharomyces pombe (strain 972 / ATCC 24843) (Fission yeast)).